The following is a 379-amino-acid chain: Homoserine O-succinyltransferase (379 aa).

Residues 51–360 (NAVLICHALS…DAPQGHDAFL (310 aa)) form the AB hydrolase-1 domain. Residue Ser-157 is the Nucleophile of the active site. Residue Arg-227 participates in substrate binding. Residues Asp-323 and His-356 contribute to the active site. Asp-357 provides a ligand contact to substrate.

This sequence belongs to the AB hydrolase superfamily. MetX family. In terms of assembly, homodimer.

It is found in the cytoplasm. It catalyses the reaction L-homoserine + succinyl-CoA = O-succinyl-L-homoserine + CoA. It participates in amino-acid biosynthesis; L-methionine biosynthesis via de novo pathway; O-succinyl-L-homoserine from L-homoserine: step 1/1. Its function is as follows. Transfers a succinyl group from succinyl-CoA to L-homoserine, forming succinyl-L-homoserine. This chain is Homoserine O-succinyltransferase, found in Ectopseudomonas mendocina (strain ymp) (Pseudomonas mendocina).